The following is a 127-amino-acid chain: Large ribosomal subunit protein bL17 (127 aa).

This sequence belongs to the bacterial ribosomal protein bL17 family. As to quaternary structure, part of the 50S ribosomal subunit. Contacts protein L32.

The sequence is that of Large ribosomal subunit protein bL17 from Fervidobacterium nodosum (strain ATCC 35602 / DSM 5306 / Rt17-B1).